The primary structure comprises 115 residues: MARVKRGNIARKRRNKILNLAKGFRGGNKNLFRTANQRVMKALCNAYRDRRRRKRDFRRLWISRINASARINGTNYSKLINGMKNSEIIINRKMLAQLALNDPKCFEKIVSSVSN.

Belongs to the bacterial ribosomal protein bL20 family.

In terms of biological role, binds directly to 23S ribosomal RNA and is necessary for the in vitro assembly process of the 50S ribosomal subunit. It is not involved in the protein synthesizing functions of that subunit. The protein is Large ribosomal subunit protein bL20 of Prochlorococcus marinus (strain MIT 9312).